Consider the following 307-residue polypeptide: Plasmodesmata-located protein 2 (307 aa).

A signal peptide spans 1–23 (MGLSISFLSIIMMMCLLFPDLNV). The Extracellular portion of the chain corresponds to 24–275 (VVKSATTEYT…STSTGATGKT (252 aa)). Gnk2-homologous domains lie at 33-136 (TTLI…VSGF) and 141-240 (GMEM…YYPN). 6 disulfide bridges follow: C40–C114, C90–C99, C102–C127, C149–C218, C194–C203, and C206–C231. Residues 246-268 (SSSSSSSSSSSSSGSSNSDPSTS) are compositionally biased toward low complexity. Residues 246-270 (SSSSSSSSSSSSSGSSNSDPSTSTG) form a disordered region. A helical membrane pass occupies residues 276 to 296 (VAIIVGGAAGVGFLVICLLFA). The interval 276–296 (VAIIVGGAAGVGFLVICLLFA) is necessary and sufficient for plasmodesmal targeting. At 297–307 (KNLMRKKHDDY) the chain is on the cytoplasmic side.

Belongs to the cysteine-rich repeat secretory protein family. Plasmodesmata-located proteins (PDLD) subfamily. As to quaternary structure, (Microbial infection) Interacts with Grapevine fanleaf virus (GFLV) 2B-MP. Highly expressed in inflorescence shoot apex. Uniformly expressed within the inflorescence meristem with the exception of a boundary zone between floral primordia and the meristem where the expression is weaker (at protein level).

It localises to the cell membrane. The protein localises to the cell junction. The protein resides in the plasmodesma. In terms of biological role, modulates cell-to-cell trafficking. The sequence is that of Plasmodesmata-located protein 2 from Arabidopsis thaliana (Mouse-ear cress).